A 457-amino-acid polypeptide reads, in one-letter code: Glutamate--tRNA ligase 2 (457 aa).

Positions Pro-8–Asn-18 match the 'HIGH' region motif. The 'KMSKS' region motif lies at Gly-249–Arg-253. Position 252 (Lys-252) interacts with ATP.

It belongs to the class-I aminoacyl-tRNA synthetase family. Glutamate--tRNA ligase type 1 subfamily. In terms of assembly, monomer.

The protein resides in the cytoplasm. It carries out the reaction tRNA(Glu) + L-glutamate + ATP = L-glutamyl-tRNA(Glu) + AMP + diphosphate. Its function is as follows. Catalyzes the attachment of glutamate to tRNA(Glu) in a two-step reaction: glutamate is first activated by ATP to form Glu-AMP and then transferred to the acceptor end of tRNA(Glu). The sequence is that of Glutamate--tRNA ligase 2 from Bartonella tribocorum (strain CIP 105476 / IBS 506).